The following is a 174-amino-acid chain: Cytochrome c-type biogenesis protein CcmE (174 aa).

Residues 1-8 lie on the Cytoplasmic side of the membrane; sequence MNPRRKSR. The chain crosses the membrane as a helical; Signal-anchor for type II membrane protein span at residues 9–29; sequence LSVVLFIFLGISVASALVLYA. At 30-174 the chain is on the periplasmic side; the sequence is LRQNIDLFYT…QEKQFKEGNQ (145 aa). 2 residues coordinate heme: histidine 131 and tyrosine 135. Positions 149 to 174 are disordered; sequence KPMGISDLKNESDRDRQEKQFKEGNQ. Basic and acidic residues predominate over residues 156–174; it reads LKNESDRDRQEKQFKEGNQ.

Belongs to the CcmE/CycJ family.

The protein localises to the cell inner membrane. Functionally, heme chaperone required for the biogenesis of c-type cytochromes. Transiently binds heme delivered by CcmC and transfers the heme to apo-cytochromes in a process facilitated by CcmF and CcmH. The polypeptide is Cytochrome c-type biogenesis protein CcmE (Histophilus somni (strain 129Pt) (Haemophilus somnus)).